A 224-amino-acid polypeptide reads, in one-letter code: Putative tyrosine-protein phosphatase OCA6 (224 aa).

Position 2 is a phosphothreonine (Thr-2). Residues 8-170 (QFSTVQPNLY…FNSEIEVDDL (163 aa)) form the Tyrosine-protein phosphatase domain. Cys-114 functions as the Phosphocysteine intermediate in the catalytic mechanism.

This sequence belongs to the protein-tyrosine phosphatase family.

It is found in the cytoplasm. It carries out the reaction O-phospho-L-tyrosyl-[protein] + H2O = L-tyrosyl-[protein] + phosphate. Required for replication of Brome mosaic virus (BMV). This is Putative tyrosine-protein phosphatase OCA6 (OCA6) from Saccharomyces cerevisiae (strain ATCC 204508 / S288c) (Baker's yeast).